The sequence spans 319 residues: Transcription factor STKL2 (319 aa).

The interval 1 to 119 (MAPLESPATA…NKKANPQRVW (119 aa)) is disordered. The span at 21–34 (EIFKSSSEESKPKD) shows a compositional bias: basic and acidic residues. Positions 38–55 (VPSSKTLKSPSAAVNSKT) are enriched in polar residues. Basic and acidic residues predominate over residues 89–112 (RAGEGSTSRDMHVKRVKKEDDNKK).

It belongs to the GeBP family. Expressed strongly in leaves and flowers, weakly in roots, and very weakly in stems.

The protein resides in the nucleus. Transcription repressor that binds DNA in a sequence-specific manner, 5'-GCCT-3', to regulate the expression of PGR. Acts as a modulatory component for the glucose-triggered developmental leaf growth process. The chain is Transcription factor STKL2 from Arabidopsis thaliana (Mouse-ear cress).